Consider the following 226-residue polypeptide: UPF0758 protein GWCH70_2550 (226 aa).

Positions 104-226 (VIRSPEDGAK…FVSLKEKGYV (123 aa)) constitute an MPN domain. H175, H177, and D188 together coordinate Zn(2+). The short motif at 175–188 (HNHPSGDPTPSRED) is the JAMM motif element.

It belongs to the UPF0758 family.

The polypeptide is UPF0758 protein GWCH70_2550 (Geobacillus sp. (strain WCH70)).